The following is a 137-amino-acid chain: BolA-like protein 1 (137 aa).

Ser-81 is subject to Phosphoserine. The tract at residues 114–137 is disordered; sequence WRENSQLDTSPPCLGGNKKTLGTP.

Belongs to the BolA/IbaG family. In terms of assembly, interacts with GLRX5. In terms of tissue distribution, widely expressed.

The protein localises to the mitochondrion. Functionally, acts as a mitochondrial iron-sulfur (Fe-S) cluster assembly factor that facilitates (Fe-S) cluster insertion into a subset of mitochondrial proteins. Probably acts together with the monothiol glutaredoxin GLRX5. May protect cells against oxidative stress. The sequence is that of BolA-like protein 1 from Homo sapiens (Human).